The sequence spans 82 residues: Small ribosomal subunit protein uS17 (82 aa).

This sequence belongs to the universal ribosomal protein uS17 family. In terms of assembly, part of the 30S ribosomal subunit.

In terms of biological role, one of the primary rRNA binding proteins, it binds specifically to the 5'-end of 16S ribosomal RNA. The sequence is that of Small ribosomal subunit protein uS17 from Aeromonas salmonicida (strain A449).